The sequence spans 110 residues: Insulin (110 aa).

The signal sequence occupies residues 1–24; that stretch reads MALWMRLLPLLAFLILWEPSPAHA. 3 cysteine pairs are disulfide-bonded: Cys31–Cys96, Cys43–Cys109, and Cys95–Cys100. The propeptide at 57-87 is c peptide; that stretch reads GVDDPQMPQLELGGSPGAGDLRALALEVARQ.

The protein belongs to the insulin family. In terms of assembly, heterodimer of a B chain and an A chain linked by two disulfide bonds.

The protein resides in the secreted. Insulin decreases blood glucose concentration. It increases cell permeability to monosaccharides, amino acids and fatty acids. It accelerates glycolysis, the pentose phosphate cycle, and glycogen synthesis in liver. The polypeptide is Insulin (INS) (Psammomys obesus (Fat sand rat)).